A 628-amino-acid polypeptide reads, in one-letter code: Chaperone protein DnaK (628 aa).

Residue threonine 195 is modified to Phosphothreonine; by autocatalysis. The tract at residues 545–628 (QLEENEGAAQ…VIDADFKAAE (84 aa)) is disordered. The segment covering 555–591 (DAKDALKAAADEAEEAVRSEDDARIESAQKRLEEELR) has biased composition (basic and acidic residues). Residues 596–612 (AQQAAGQGQPQGAQAQG) are compositionally biased toward low complexity. The span at 614-628 (KADDDVIDADFKAAE) shows a compositional bias: basic and acidic residues.

The protein belongs to the heat shock protein 70 family.

Acts as a chaperone. The protein is Chaperone protein DnaK of Deinococcus deserti (strain DSM 17065 / CIP 109153 / LMG 22923 / VCD115).